A 271-amino-acid chain; its full sequence is Extent of cell elongation protein 1 (271 aa).

The N-terminal stretch at 1–18 is a signal peptide; sequence MKFSKIACATVFALSSQA. Residues 62 to 82 form a helical membrane-spanning segment; sequence SIIGIIMGILGNIPQVIQIIM.

Polymerizes in solution to form membrane pores. Cleavage by KEX2 generates 8 peptides ECE1-I to ECE1-VIII, all terminating in Lys-Arg. Only peptide ECE1-III, called candidalysin, shows toxin activity.

Its subcellular location is the secreted. It localises to the host cell membrane. Secreted protein cleaved by KEX2 in 8 similar peptides (ECE1-I to ECE1-VIII). Stimulates biofilm formation. Functionally, acts as a cytolytic peptide toxin that directly damages host epithelial membranes, triggers a danger response signaling pathway and activates epithelial immunity. Polymerizes in solution to form membrane pores to damage epithelial cells. Induces calcium influx, oxidative stress, mitochondrial dysfunction and ATP depletion in host cells, leading to epithelial necrosis. Serves as a danger signal that potentiates the immune response, and more specifically IL-17 response. Induces cytokine/chemokine secretion by host (especially CCL2/3/4, CXCL1 and S100A8), neutrophil recruitment, and promotes mortality in zebrafish and murine models of systemic fungal infection. Mediates distinct epithelial inflammatory responses through p38, EGFR-ERK and TREM-1/DAP12 pathways. Acts as one of the hypha-derived drivers of NLRP3 inflammasome responses in primary macrophages and thus contributes to the capacity to induce maturation and secretion of IL-1beta from primary macrophages. Stimulates mast cells by mediating cross-talk between signaling pathways activated by the dectin-1 receptor and MAPKs. Enables escape via the gasdermin-mediated pyroptosis, as well as a cell lysis pathway associated with macrophage extracellular trap formation termed ETosis. Acts as the main hemolytic factor of C.albicans. As an exotoxine, also promotes alcohol-associated liver disease or oral carcinogenesis. In Candida albicans (strain SC5314 / ATCC MYA-2876) (Yeast), this protein is Extent of cell elongation protein 1.